We begin with the raw amino-acid sequence, 131 residues long: Profilin-2 (131 aa).

It belongs to the profilin family. In terms of assembly, occurs in many kinds of cells as a complex with monomeric actin in a 1:1 ratio. In terms of tissue distribution, expressed in vascular bundles of roots, hypocotyls, cotyledons, leaves, sepals, petals, stamen filaments and stalks of developing seeds. Expressed in leaf epidermal cells, trichomes and stem epidermal cells. Detected in phloem exudates (at protein level).

The protein localises to the cytoplasm. Its subcellular location is the cytoskeleton. The protein resides in the endoplasmic reticulum. It is found in the cytosol. It localises to the nucleus. In terms of biological role, binds to actin monomers and regulates the organization of the actin cytoskeleton. At high concentrations, profilin prevents the polymerization of actin, whereas it enhances it at low concentrations. At low concentrations, associates with the poly-proline motif of formins to enhance actin filament elongation rate. Binds G-actin and poly-L-proline with low affinity in vitro. Binds ACT1, ACT7 and ACT11 and inhibits actin polymerization. May be involved in the cross-talk between vesicular trafficking and the actin cytoskeleton. Inhibits cell growth of various pathogenic fungal strains. May play a role as antifungal proteins in the defense system against fungal pathogen attacks. The polypeptide is Profilin-2 (Arabidopsis thaliana (Mouse-ear cress)).